Here is a 249-residue protein sequence, read N- to C-terminus: Ribonuclease 3 (249 aa).

Positions 20–149 (FKKFQERISV…FIGALYLDQG (130 aa)) constitute an RNase III domain. Position 62 (Glu62) interacts with Mg(2+). The active site involves Asp66. Residues Asp135 and Glu138 each coordinate Mg(2+). Residue Glu138 is part of the active site. The DRBM domain maps to 175 to 244 (DFKSQLQEFV…AQEALAKLQK (70 aa)). The segment at 225–249 (RSKKEAEQHAAQEALAKLQKHHMKQ) is disordered.

Belongs to the ribonuclease III family. As to quaternary structure, homodimer. Mg(2+) serves as cofactor.

The protein localises to the cytoplasm. It catalyses the reaction Endonucleolytic cleavage to 5'-phosphomonoester.. Its function is as follows. Digests double-stranded RNA. Involved in the processing of primary rRNA transcript to yield the immediate precursors to the large and small rRNAs (23S and 16S). Processes some mRNAs, and tRNAs when they are encoded in the rRNA operon. Processes pre-crRNA and tracrRNA of type II CRISPR loci if present in the organism. The protein is Ribonuclease 3 of Bacillus licheniformis (strain ATCC 14580 / DSM 13 / JCM 2505 / CCUG 7422 / NBRC 12200 / NCIMB 9375 / NCTC 10341 / NRRL NRS-1264 / Gibson 46).